A 256-amino-acid chain; its full sequence is Lysine-rich coiled-coil protein 1 (256 aa).

2 disordered regions span residues 61–83 (QRIP…TEDR) and 141–256 (GHST…ILGF). Composition is skewed to polar residues over residues 64–79 (PSGT…SSSQ) and 141–153 (GHST…SHRQ). 2 stretches are compositionally biased toward basic and acidic residues: residues 161–188 (HLEE…DLNK) and 218–227 (KNRDVSSKKE). A coiled-coil region spans residues 208-247 (TEKLKNRKEKKNRDVSSKKEDRKRRKEKKEQGEERTEEEM).

The sequence is that of Lysine-rich coiled-coil protein 1 (Krcc1) from Rattus norvegicus (Rat).